A 286-amino-acid polypeptide reads, in one-letter code: ATP synthase gamma chain (286 aa).

The protein belongs to the ATPase gamma chain family. F-type ATPases have 2 components, CF(1) - the catalytic core - and CF(0) - the membrane proton channel. CF(1) has five subunits: alpha(3), beta(3), gamma(1), delta(1), epsilon(1). CF(0) has three main subunits: a, b and c.

It localises to the cell inner membrane. Functionally, produces ATP from ADP in the presence of a proton gradient across the membrane. The gamma chain is believed to be important in regulating ATPase activity and the flow of protons through the CF(0) complex. The polypeptide is ATP synthase gamma chain (Shewanella sp. (strain MR-4)).